Consider the following 481-residue polypeptide: Aspartyl/glutamyl-tRNA(Asn/Gln) amidotransferase subunit B (481 aa).

Belongs to the GatB/GatE family. GatB subfamily. In terms of assembly, heterotrimer of A, B and C subunits.

The catalysed reaction is L-glutamyl-tRNA(Gln) + L-glutamine + ATP + H2O = L-glutaminyl-tRNA(Gln) + L-glutamate + ADP + phosphate + H(+). The enzyme catalyses L-aspartyl-tRNA(Asn) + L-glutamine + ATP + H2O = L-asparaginyl-tRNA(Asn) + L-glutamate + ADP + phosphate + 2 H(+). Allows the formation of correctly charged Asn-tRNA(Asn) or Gln-tRNA(Gln) through the transamidation of misacylated Asp-tRNA(Asn) or Glu-tRNA(Gln) in organisms which lack either or both of asparaginyl-tRNA or glutaminyl-tRNA synthetases. The reaction takes place in the presence of glutamine and ATP through an activated phospho-Asp-tRNA(Asn) or phospho-Glu-tRNA(Gln). This is Aspartyl/glutamyl-tRNA(Asn/Gln) amidotransferase subunit B from Pseudomonas paraeruginosa (strain DSM 24068 / PA7) (Pseudomonas aeruginosa (strain PA7)).